Reading from the N-terminus, the 625-residue chain is Alpha-amylase 1 (625 aa).

The N-terminal stretch at 1-22 (MGFSKIALFSLFALFGLPTSLA) is a signal peptide. A disulfide bond links C51 and C59. Position 105 (W105) interacts with substrate. Ca(2+) is bound at residue N143. N-linked (GlcNAc...) asparagine glycans are attached at residues N153, N163, and N180. Cysteines 172 and 187 form a disulfide. Ca(2+) is bound by residues E185 and D198. Substrate is bound at residue R227. D229 is a Ca(2+) binding site. D229 (nucleophile) is an active-site residue. 232-233 (KQ) contributes to the substrate binding site. N241 carries an N-linked (GlcNAc...) asparagine glycan. E253 is a Ca(2+) binding site. E253 (proton donor) is an active-site residue. N-linked (GlcNAc...) asparagine glycosylation is found at N260 and N286. A disulfide bridge connects residues C263 and C306. D322 contacts substrate. Residue N331 is glycosylated (N-linked (GlcNAc...) asparagine). R370 serves as a coordination point for substrate. N-linked (GlcNAc...) asparagine glycans are attached at residues N440 and N461. The disordered stretch occupies residues 526–579 (SATSSSKSSSSSSSRSGSSSSSSSRSGSTSSSGSSHTITSTSQSVHTSGSSTST). A lipid anchor (GPI-anchor amidated serine) is attached at S603. Positions 604–625 (SANAVRVSILGVAAFIAIVLFI) are cleaved as a propeptide — removed in mature form.

Belongs to the glycosyl hydrolase 13 family. The cofactor is Ca(2+).

It is found in the cell membrane. It catalyses the reaction Endohydrolysis of (1-&gt;4)-alpha-D-glucosidic linkages in polysaccharides containing three or more (1-&gt;4)-alpha-linked D-glucose units.. The chain is Alpha-amylase 1 (aah1) from Schizosaccharomyces pombe (strain 972 / ATCC 24843) (Fission yeast).